Consider the following 425-residue polypeptide: Inositol hexakisphosphate kinase 2 (425 aa).

ATP contacts are provided by residues 206–208 and Asp-219; that span reads ENL. Substrate contacts are provided by residues 215–223, Lys-221, and 235–242; these read PCVLDLKMG and KAANQIRK. ATP is bound at residue Asp-382. His-385 serves as a coordination point for substrate.

The protein belongs to the inositol phosphokinase (IPK) family. Highly expressed in small intestine.

The protein resides in the nucleus. The enzyme catalyses 1D-myo-inositol hexakisphosphate + ATP = 5-diphospho-1D-myo-inositol 1,2,3,4,6-pentakisphosphate + ADP. It functions in the pathway phospholipid metabolism; phosphatidylinositol metabolism. Functionally, converts inositol hexakisphosphate (InsP6) to diphosphoinositol pentakisphosphate (InsP7/PP-InsP5). The sequence is that of Inositol hexakisphosphate kinase 2 (Ip6k2) from Rattus norvegicus (Rat).